A 167-amino-acid polypeptide reads, in one-letter code: Bacterioferritin (167 aa).

The 145-residue stretch at 1 to 145 (MQGDPEVIEF…TQLDLIEKLG (145 aa)) folds into the Ferritin-like diiron domain. Glutamate 18 and glutamate 51 together coordinate Fe cation. Methionine 52 contributes to the heme b binding site. Fe cation-binding residues include histidine 54, glutamate 94, glutamate 127, and histidine 130.

Belongs to the bacterioferritin family. In terms of assembly, homooligomer of 24 subunits, arranged as 12 dimers, that are packed together to form an approximately spherical molecule with a central cavity, in which large amounts of iron can be deposited. Heme b serves as cofactor.

It catalyses the reaction 4 Fe(2+) + O2 + 4 H(+) = 4 Fe(3+) + 2 H2O. The enzyme catalyses Fe(2+)(in) = Fe(2+)(out). Functionally, iron-storage protein, whose ferroxidase center binds Fe(2+), oxidizes it using dioxygen to Fe(3+), and participates in the subsequent Fe(3+) oxide mineral core formation within the central cavity of the BFR protein shell. The polypeptide is Bacterioferritin (bfr) (Streptomyces coelicolor (strain ATCC BAA-471 / A3(2) / M145)).